A 206-amino-acid chain; its full sequence is Regulator of rDNA transcription 14 (206 aa).

The tract at residues 178-206 is disordered; the sequence is FVKDHRYPGLTPGLAPVGLSDEEDSSEED. Phosphoserine occurs at positions 197, 202, and 203. The span at 197–206 shows a compositional bias: acidic residues; that stretch reads SDEEDSSEED.

Belongs to the RRT14 family.

It localises to the nucleus. The protein localises to the nucleolus. Its function is as follows. Involved in ribosome biogenesis, probably through modulation of rDNA transcription. The protein is Regulator of rDNA transcription 14 (RRT14) of Saccharomyces cerevisiae (strain AWRI1631) (Baker's yeast).